The following is a 316-amino-acid chain: ATP synthase gamma chain (316 aa).

This sequence belongs to the ATPase gamma chain family. F-type ATPases have 2 components, CF(1) - the catalytic core - and CF(0) - the membrane proton channel. CF(1) has five subunits: alpha(3), beta(3), gamma(1), delta(1), epsilon(1). CF(0) has three main subunits: a, b and c.

The protein localises to the cellular thylakoid membrane. Its function is as follows. Produces ATP from ADP in the presence of a proton gradient across the membrane. The gamma chain is believed to be important in regulating ATPase activity and the flow of protons through the CF(0) complex. The polypeptide is ATP synthase gamma chain (Prochlorococcus marinus (strain MIT 9515)).